Here is a 248-residue protein sequence, read N- to C-terminus: 2,3-bisphosphoglycerate-dependent phosphoglycerate mutase (248 aa).

Residues Arg-8–Asn-15, Thr-21–Gly-22, Arg-60, Glu-87–Tyr-90, Lys-98, Arg-114–Arg-115, and Gly-183–Asn-184 each bind substrate. His-9 functions as the Tele-phosphohistidine intermediate in the catalytic mechanism. Residue Glu-87 is the Proton donor/acceptor of the active site.

This sequence belongs to the phosphoglycerate mutase family. BPG-dependent PGAM subfamily. Homodimer.

It carries out the reaction (2R)-2-phosphoglycerate = (2R)-3-phosphoglycerate. The protein operates within carbohydrate degradation; glycolysis; pyruvate from D-glyceraldehyde 3-phosphate: step 3/5. Its function is as follows. Catalyzes the interconversion of 2-phosphoglycerate and 3-phosphoglycerate. The sequence is that of 2,3-bisphosphoglycerate-dependent phosphoglycerate mutase from Paraburkholderia phytofirmans (strain DSM 17436 / LMG 22146 / PsJN) (Burkholderia phytofirmans).